Reading from the N-terminus, the 229-residue chain is Sugar fermentation stimulation protein homolog (229 aa).

The protein belongs to the SfsA family.

This Carboxydothermus hydrogenoformans (strain ATCC BAA-161 / DSM 6008 / Z-2901) protein is Sugar fermentation stimulation protein homolog.